Consider the following 274-residue polypeptide: Ceramide synthase (274 aa).

The TLC domain occupies 34–261 (ADAVIVSARL…ICRGACRLFW (228 aa)). A run of 4 helical transmembrane segments spans residues 130-150 (FLMV…SVVW), 159-179 (LGCM…KILI), 194-214 (ALML…LYWA), and 223-243 (LLAV…LLLA).

In terms of tissue distribution, expressed in testis. Expressed in the retina with higher expression levels in the macular than in the peripheral region.

It is found in the golgi apparatus membrane. Its subcellular location is the endoplasmic reticulum membrane. It catalyses the reaction sphing-4-enine + octadecanoyl-CoA = N-octadecanoylsphing-4-enine + CoA + H(+). It carries out the reaction eicosanoyl-CoA + sphing-4-enine = N-eicosanoyl-sphing-4-enine + CoA + H(+). The catalysed reaction is sphing-4-enine + hexadecanoyl-CoA = N-hexadecanoylsphing-4-enine + CoA + H(+). Involved in ceramide synthesis. The polypeptide is Ceramide synthase (Homo sapiens (Human)).